A 634-amino-acid polypeptide reads, in one-letter code: MTNSNLRTENHFDYVKISIASPQRIMDWGQRTLPNGQVVGEVTKPETINYRTLKPEMDGLFCEKIFGPSKDWECHCGKYKRVRHRGIVCERCGVEVTESRVRRHRMGYIKLAAPVSHVWYLKGIPSYVAILLDIPLRDVEQIVYFNCYVVLDPGDHKELKYKQLLTEDEWLEIEDEIYAEDSTIENEPFVGIGAEALKQLLEDLDLHQIAEELREEITNSKGQKRAKLIKRIRVIDNFIATNAKPEWMVLDAIPVIPPDLRPMVQLDGGRFATSDLNDLYRRVINRNNRLARLQEILAPEIIVRNEKRMLQEAVDALIDNGRRGRTVVGANNRALKSLSDIIEGKQGRFRQNLLGKRVDYSGRSVIVVGPKLKMHQCGLPKEMAIELFQPFVIHRLIRQNIVNNIKAAKKLIQKADDEVMQVLQEVIEGHPILLNRAPTLHRLGIQAFEPKLVGGRAIQLHPLVCPAFNADFDGDQMAVHVPLALEAQTEARMLMLASNNILSPATGEPIVTPSQDMVLGSYYLTALQPNYQKPEFGDNKTTFASLEDVIFAFEDKRLSLHEWIWVRFNGEVEDEDEMLSPQKTKELEDGSRLEIWNLRRDRFGSDNNLISRFVLTTVGRVVMNYTIIDSVSKT.

Positions 74, 76, 89, and 92 each coordinate Zn(2+). Mg(2+) contacts are provided by Asp471, Asp473, and Asp475.

This sequence belongs to the RNA polymerase beta' chain family. RpoC1 subfamily. In cyanobacteria the RNAP catalytic core is composed of 2 alpha, 1 beta, 1 beta', 1 gamma and 1 omega subunit. When a sigma factor is associated with the core the holoenzyme is formed, which can initiate transcription. It depends on Mg(2+) as a cofactor. Zn(2+) serves as cofactor.

The catalysed reaction is RNA(n) + a ribonucleoside 5'-triphosphate = RNA(n+1) + diphosphate. In terms of biological role, DNA-dependent RNA polymerase catalyzes the transcription of DNA into RNA using the four ribonucleoside triphosphates as substrates. This chain is DNA-directed RNA polymerase subunit gamma, found in Prochlorococcus marinus (strain AS9601).